We begin with the raw amino-acid sequence, 378 residues long: Decaprenyl-diphosphate synthase subunit 1 (378 aa).

Residues K72, R75, and H130 each contribute to the isopentenyl diphosphate site. Residues D137 and D141 each contribute to the Mg(2+) site. R147 is a binding site for isopentenyl diphosphate.

The protein belongs to the FPP/GGPP synthase family. Heterotetramer of 2 dps1 and 2 dlp1 subunits. It depends on Mg(2+) as a cofactor.

Its subcellular location is the mitochondrion. The enzyme catalyses 7 isopentenyl diphosphate + (2E,6E)-farnesyl diphosphate = all-trans-decaprenyl diphosphate + 7 diphosphate. The protein operates within cofactor biosynthesis; ubiquinone biosynthesis. In terms of biological role, supplies decaprenyl diphosphate, the precursor for the side chain of the isoprenoid quinones ubiquinone-10. This Schizosaccharomyces pombe (strain 972 / ATCC 24843) (Fission yeast) protein is Decaprenyl-diphosphate synthase subunit 1 (dps1).